The chain runs to 94 residues: Small ribosomal subunit protein uS19 (94 aa).

Positions 73 to 94 (EFSPTRRFGGHADKKSKKGQVK) are disordered.

This sequence belongs to the universal ribosomal protein uS19 family.

Its function is as follows. Protein S19 forms a complex with S13 that binds strongly to the 16S ribosomal RNA. In Kosmotoga olearia (strain ATCC BAA-1733 / DSM 21960 / TBF 19.5.1), this protein is Small ribosomal subunit protein uS19.